A 265-amino-acid chain; its full sequence is 3-deoxy-manno-octulosonate cytidylyltransferase (265 aa).

It belongs to the KdsB family.

The protein resides in the cytoplasm. The catalysed reaction is 3-deoxy-alpha-D-manno-oct-2-ulosonate + CTP = CMP-3-deoxy-beta-D-manno-octulosonate + diphosphate. The protein operates within nucleotide-sugar biosynthesis; CMP-3-deoxy-D-manno-octulosonate biosynthesis; CMP-3-deoxy-D-manno-octulosonate from 3-deoxy-D-manno-octulosonate and CTP: step 1/1. It participates in bacterial outer membrane biogenesis; lipopolysaccharide biosynthesis. Functionally, activates KDO (a required 8-carbon sugar) for incorporation into bacterial lipopolysaccharide in Gram-negative bacteria. The chain is 3-deoxy-manno-octulosonate cytidylyltransferase from Delftia acidovorans (strain DSM 14801 / SPH-1).